We begin with the raw amino-acid sequence, 89 residues long: Small ribosomal subunit protein uS14 (89 aa).

It belongs to the universal ribosomal protein uS14 family. In terms of assembly, part of the 30S ribosomal subunit. Contacts proteins S3 and S10.

Its function is as follows. Binds 16S rRNA, required for the assembly of 30S particles and may also be responsible for determining the conformation of the 16S rRNA at the A site. The chain is Small ribosomal subunit protein uS14 from Exiguobacterium sibiricum (strain DSM 17290 / CCUG 55495 / CIP 109462 / JCM 13490 / 255-15).